A 168-amino-acid polypeptide reads, in one-letter code: Myelin basic protein (168 aa).

Ala1 carries the post-translational modification N-acetylalanine. Phosphoserine is present on residues Ser7 and Ser12. Residue Tyr14 is modified to Phosphotyrosine. At Thr17 the chain carries Phosphothreonine. Ser19 bears the Phosphoserine mark. A Phosphothreonine modification is found at Thr20. Residues Arg25 and Arg31 each carry the citrulline modification. Phosphothreonine is present on Thr35. A Phosphoserine modification is found at Ser40. Positions 42–84 (GRFFSSDRGAPKRGSGKDHAARTTHYGSLPQKSGHRPQDENPV) are disordered. 2 positions are modified to omega-N-methylarginine: Arg43 and Arg49. The interval 45 to 86 (FSSDRGAPKRGSGKDHAARTTHYGSLPQKSGHRPQDENPVVH) is induces experimental autoimmune encephalomyelitis (EAE). A Phosphoserine modification is found at Ser56. Phosphothreonine is present on Thr65. Position 67 is a phosphotyrosine (Tyr67). Ser74 is modified (phosphoserine). A phosphothreonine mark is found at Thr93 and Thr96. Gln101 is subject to Deamidated glutamine; partial. Arg105 carries the post-translational modification Omega-N-methylarginine; alternate. Arg105 is modified (symmetric dimethylarginine; alternate). The residue at position 113 (Ser113) is a Phosphoserine. At Lys120 the chain carries N6-acetyllysine. Arg128 carries the citrulline modification. Gln145 is modified (deamidated glutamine). Residue Arg157 is modified to Citrulline. At Ser159 the chain carries Phosphoserine. The residue at position 163 (Ser163) is a Phosphoserine; by UHMK1. Residue Arg168 is modified to Citrulline.

The protein belongs to the myelin basic protein family. Homodimer. As in other animals, several charge isomers may be produced as a result of optional post-translational modifications, such as phosphorylation of serine or threonine residues, deamidation of glutamine or asparagine residues, citrullination and methylation of arginine residues. Post-translationally, phosphorylated by TAOK2, VRK2, MAPK11, MAPK12, MAPK14 and MINK1. In terms of processing, proteolytically cleaved in B cell lysosomes by cathepsin CTSG which degrades the major immunogenic MBP epitope and prevents the activation of MBP-specific autoreactive T cells. As to expression, found in both the central and the peripheral nervous system.

It localises to the myelin membrane. Functionally, is, with PLP, the most abundant protein component of the myelin membrane in the CNS. Has a role in both the formation and stabilization of this compact multilayer arrangement of bilayers. Each splice variant and charge isomer may have a specialized function in the assembly of an optimized, biochemically functional myelin membrane. The sequence is that of Myelin basic protein (MBP) from Oryctolagus cuniculus (Rabbit).